Here is a 293-residue protein sequence, read N- to C-terminus: Sphingolipid C4-hydroxylase sur2 (293 aa).

Transmembrane regions (helical) follow at residues 18–38, 68–88, and 127–147; these read LVSPVIIYWVASAFFGFLHYI, AVLFQQLCEVVVGIALAMFEG, and FIVPAFQYFFAFFIIDSWQYF. The Fatty acid hydroxylase domain maps to 136–270; sequence FAFFIIDSWQ…FTFWDHVLGT (135 aa).

Belongs to the sterol desaturase family.

It is found in the endoplasmic reticulum membrane. It functions in the pathway membrane lipid metabolism; sphingolipid biosynthesis. Required for hydroxylation of C-4 in the sphingoid moiety of ceramide. Involved in the response to syringomycin. The chain is Sphingolipid C4-hydroxylase sur2 (sur2) from Schizosaccharomyces pombe (strain 972 / ATCC 24843) (Fission yeast).